The sequence spans 135 residues: MAEKFDHLEEHLEKFVENIRQLGIIVSDFQPSSQAGLSQKLNFIVTGLQDIDKCRQQLHDITVPLEVFEYIDQGRNPQLYTKECLERALAKNEQVKGKIDTMKKFKSLLIQELSKVFPEDMAKYRSIRGEDHPPS.

Belongs to the Mediator complex subunit 10 family. In terms of assembly, component of the Mediator complex, which is composed of MED1, MED4, MED6, MED7, MED8, MED9, MED10, MED11, MED12, MED13, MED13L, MED14, MED15, MED16, MED17, MED18, MED19, MED20, MED21, MED22, MED23, MED24, MED25, MED26, MED27, MED29, MED30, MED31, CCNC, CDK8 and CDC2L6/CDK11. The MED12, MED13, CCNC and CDK8 subunits form a distinct module termed the CDK8 module. Mediator containing the CDK8 module is less active than Mediator lacking this module in supporting transcriptional activation. Individual preparations of the Mediator complex lacking one or more distinct subunits have been variously termed ARC, CRSP, DRIP, PC2, SMCC and TRAP.

The protein resides in the nucleus. Its function is as follows. Component of the Mediator complex, a coactivator involved in the regulated transcription of nearly all RNA polymerase II-dependent genes. Mediator functions as a bridge to convey information from gene-specific regulatory proteins to the basal RNA polymerase II transcription machinery. Mediator is recruited to promoters by direct interactions with regulatory proteins and serves as a scaffold for the assembly of a functional preinitiation complex with RNA polymerase II and the general transcription factors. This Mus musculus (Mouse) protein is Mediator of RNA polymerase II transcription subunit 10 (Med10).